The sequence spans 523 residues: Succinate-semialdehyde dehydrogenase, mitochondrial (523 aa).

A mitochondrion-targeting transit peptide spans 1–35 (MATCFLLRNFCAARPALRPPGRLLREPAGAQRRSY). K114 is subject to N6-acetyllysine; alternate. An N6-succinyllysine; alternate modification is found at K114. N6-succinyllysine is present on residues K123 and K172. Residues R201 and 216–219 (KPAE) contribute to the NAD(+) site. R201 serves as a coordination point for substrate. An N6-acetyllysine; alternate modification is found at K253. K253 is subject to N6-succinyllysine; alternate. 272 to 277 (GSTATG) is a binding site for NAD(+). The active-site Proton acceptor is the E294. R322 is a substrate binding site. C328 serves as the catalytic Nucleophile. The cysteines at positions 328 and 330 are disulfide-linked. An N6-acetyllysine modification is found at K353. K390 bears the N6-succinyllysine mark. Position 399 is an N6-acetyllysine (K399). Residue S486 coordinates substrate. Position 487 is a phosphoserine (S487).

This sequence belongs to the aldehyde dehydrogenase family. In terms of assembly, homotetramer. As to expression, brain, pancreas, heart, liver, skeletal muscle, kidney. Lower in spleen, lung, kidney and testis.

The protein localises to the mitochondrion. It carries out the reaction succinate semialdehyde + NAD(+) + H2O = succinate + NADH + 2 H(+). The protein operates within amino-acid degradation; 4-aminobutanoate degradation. Its activity is regulated as follows. Redox-regulated. Inhibited under oxydizing conditions. Functionally, catalyzes one step in the degradation of the inhibitory neurotransmitter gamma-aminobutyric acid (GABA). In Rattus norvegicus (Rat), this protein is Succinate-semialdehyde dehydrogenase, mitochondrial (Aldh5a1).